Reading from the N-terminus, the 127-residue chain is Large ribosomal subunit protein bL12 (127 aa).

The tract at residues 98–127 (PKPIKEGAPKAEAESLKSKLEEAGAEVELK) is disordered.

It belongs to the bacterial ribosomal protein bL12 family. In terms of assembly, homodimer. Part of the ribosomal stalk of the 50S ribosomal subunit. Forms a multimeric L10(L12)X complex, where L10 forms an elongated spine to which 2 to 4 L12 dimers bind in a sequential fashion. Binds GTP-bound translation factors.

Functionally, forms part of the ribosomal stalk which helps the ribosome interact with GTP-bound translation factors. Is thus essential for accurate translation. This Amoebophilus asiaticus (strain 5a2) protein is Large ribosomal subunit protein bL12.